The following is a 1588-amino-acid chain: MLPPKHLSATKPKKSWAPNLYELDSDLTKEPDVIIGEGPTDSEFFHQRFRNLIYVEFVGPRKTLIKLRNLCLDWLQPETRTKEEIIELLVLEQYLTIIPEKLKPWVRAKKPENCEKLVTLLENYKEMYQPEDDNNSDVTSDDDMTRNRRESSPPHSVHSFSDRDWDRRGRSRDMEPRDRWSHTRNPRSRMPPRDLSLPVVAKTSFEMDREDDRDSRAYESRSQDAESYQNVVDLAEDRKPHNTIQDNMENYRKLLSLVQLAEDDGHSHMTQGHSSRSKRSAYPSTSRGLKTMPEAKKSTHRRGICEDESSHGVIMEKFIKDVSRSSKSGRARESSDRSQRFPRMSDDNWKDISLNKRESVIQQRVYEGNAFRGGFRFNSTLVSRKRVLERKRRYHFDTDGKGSIHDQKGCPRKKPFECGSEMRKAMSVSSLSSLSSPSFTESQPIDFGAMPYVCDECGRSFSVISEFVEHQIMHTRENLYEYGESFIHSVAVSEVQKSQVGGKRFECKDCGETFNKSAALAEHRKIHARGYLVECKNQECEEAFMPSPTFSELQKIYGKDKFYECRVCKETFLHSSALIEHQKIHFGDDKDNEREHERERERERGETFRPSPALNEFQKMYGKEKMYECKVCGETFLHSSSLKEHQKIHTRGNPFENKGKVCEETFIPGQSLKRRQKTYNKEKLCDFTDGRDAFMQSSELSEHQKIHSRKNLFEGRGYEKSVIHSGPFTESQKSHTITRPLESDEDEKAFTISSNPYENQKIPTKENVYEAKSYERSVIHSLASVEAQKSHSVAGPSKPKVMAESTIQSFDAINHQRVRAGGNTSEGREYSRSVIHSLVASKPPRSHNGNELVESNEKGESSIYISDLNDKRQKIPARENPCEGGSKNRNYEDSVIQSVFRAKPQKSVPGEGSGEFKKDGEFSVPSSNVREYQKARAKKKYIEHRSNETSVIHSLPFGEQTFRPRGMLYECQECGECFAHSSDLTEHQKIHDREKPSGSRNYEWSVIRSLAPTDPQTSYAQEQYAKEQARNKCKDFRQFFATSEDLNTNQKIYDQEKSHGEESQGENTDGEETHSEETHGQETIEDPVIQGSDMEDPQKDDPDDKIYECEDCGLGFVDLTDLTDHQKVHSRKCLVDSREYTHSVIHTHSISEYQRDYTGEQLYECPKCGESFIHSSFLFEHQRIHEQDQLYSMKGCDDGFIALLPMKPRRNRAAERNPALAGSAIRCLLCGQGFIHSSALNEHMRLHREDDLLEQSQMAEEAIIPGLALTEFQRSQTEERLFECAVCGESFVNPAELADHVTVHKNEPYEYGSSYTHTSFLTEPLKGAIPFYECKDCGKSFIHSTVLTKHKELHLEEEEEDEAAAAAAAAAQEVEANVHVPQVVLRIQGLNVEAAEPEVEAAEPEVEAAEPEVEAAEPNGEAEGPDGEAAEPIGEAGQPNGEAEQPNGDADEPDGAGIEDPEERAEEPEGKAEEPEGDADEPDGVGIEDPEEGEDQEIQVEEPYYDCHECTETFTSSTAFSEHLKTHASMIIFEPANAFGECSGYIERASTSTGGANQADEKYFKCDVCGQLFNDRLSLARHQNTHTG.

In terms of domain architecture, SCAN box spans 46–128 (HQRFRNLIYV…TLLENYKEMY (83 aa)). Disordered stretches follow at residues 128–231 (YQPE…YQNV), 265–304 (GHSHMTQGHSSRSKRSAYPSTSRGLKTMPEAKKSTHRRGI), and 317–347 (KFIKDVSRSSKSGRARESSDRSQRFPRMSDD). Residues 129–142 (QPEDDNNSDVTSDD) show a composition bias toward acidic residues. Basic and acidic residues-rich tracts occupy residues 143-152 (DMTRNRRESS), 160-181 (FSDRDWDRRGRSRDMEPRDRWS), 205-224 (FEMDREDDRDSRAYESRSQD), and 293-304 (PEAKKSTHRRGI). C2H2-type zinc fingers lie at residues 452–474 (YVCDECGRSFSVISEFVEHQIMH), 505–527 (FECKDCGETFNKSAALAEHRKIH), and 563–585 (YECRVCKETFLHSSALIEHQKIH). Positions 588–607 (DDKDNEREHERERERERGET) are enriched in basic and acidic residues. Residues 588–608 (DDKDNEREHERERERERGETF) are disordered. Residues 627-649 (YECKVCGETFLHSSSLKEHQKIH) form a C2H2-type 4 zinc finger. Disordered stretches follow at residues 839-889 (VASK…SKNR) and 905-929 (QKSVPGEGSGEFKKDGEFSVPSSNV). Over residues 868–881 (LNDKRQKIPARENP) the composition is skewed to basic and acidic residues. The C2H2-type 5 zinc-finger motif lies at 969–991 (YECQECGECFAHSSDLTEHQKIH). Residues 1056–1104 (EKSHGEESQGENTDGEETHSEETHGQETIEDPVIQGSDMEDPQKDDPDD) are disordered. A compositionally biased stretch (basic and acidic residues) spans 1071-1082 (EETHSEETHGQE). 5 C2H2-type zinc fingers span residues 1107–1129 (YECEDCGLGFVDLTDLTDHQKVH), 1163–1185 (YECPKCGESFIHSSFLFEHQRIH), 1225–1247 (IRCLLCGQGFIHSSALNEHMRLH), 1282–1304 (FECAVCGESFVNPAELADHVTVH), and 1332–1354 (YECKDCGKSFIHSTVLTKHKELH). A compositionally biased stretch (acidic residues) spans 1396-1415 (EPEVEAAEPEVEAAEPEVEA). The disordered stretch occupies residues 1396-1495 (EPEVEAAEPE…GIEDPEEGED (100 aa)). Tandem repeats lie at residues 1397 to 1403 (PEVEAAE), 1404 to 1410 (PEVEAAE), 1411 to 1417 (PEVEAAE), 1418 to 1422 (PNGEA), 1425 to 1429 (PDGEA), 1432 to 1436 (PIGEA), and 1439 to 1443 (PNGEA). Residues 1397–1417 (PEVEAAEPEVEAAEPEVEAAE) are 3 X 7 AA repeat of P-E-V-E-A-A-E. Positions 1418 to 1443 (PNGEAEGPDGEAAEPIGEAGQPNGEA) are 4 X 5 AA repeat of P-X-G-E-A. Composition is skewed to acidic residues over residues 1449 to 1466 (DADEPDGAGIEDPEERAE) and 1475 to 1495 (PEGDADEPDGVGIEDPEEGED). 2 C2H2-type zinc fingers span residues 1505-1527 (YDCHECTETFTSSTAFSEHLKTH) and 1564-1586 (FKCDVCGQLFNDRLSLARHQNTH).

This sequence belongs to the krueppel C2H2-type zinc-finger protein family. Homodimer. Interacts with SIAH1A and SIAH2. Interacts with TRAF2. In terms of tissue distribution, brain, glial cells, astrocytes, embryo, placenta, testis, ovary and uterus. In the placenta it is found in the layer of villous cytotrophoblast cells while in the ovary it is found in the cells of the ovarian stroma including the thecal layers around the follicles. Expression is highly repressed in glioma cell lines.

The protein resides in the nucleus. It localises to the cytoplasm. Functionally, induces apoptosis in cooperation with SIAH1A. Acts as a mediator between p53/TP53 and BAX in a neuronal death pathway that is activated by DNA damage. Acts synergistically with TRAF2 and inhibits TNF induced apoptosis through activation of NF-kappa-B. Possesses a tumor suppressing activity in glioma cells. The chain is Paternally-expressed gene 3 protein (PEG3) from Homo sapiens (Human).